The primary structure comprises 352 residues: N-acetyl-gamma-glutamyl-phosphate reductase (352 aa).

The active site involves C155.

This sequence belongs to the NAGSA dehydrogenase family. Type 1 subfamily.

The protein localises to the cytoplasm. The enzyme catalyses N-acetyl-L-glutamate 5-semialdehyde + phosphate + NADP(+) = N-acetyl-L-glutamyl 5-phosphate + NADPH + H(+). It participates in amino-acid biosynthesis; L-arginine biosynthesis; N(2)-acetyl-L-ornithine from L-glutamate: step 3/4. Catalyzes the NADPH-dependent reduction of N-acetyl-5-glutamyl phosphate to yield N-acetyl-L-glutamate 5-semialdehyde. This chain is N-acetyl-gamma-glutamyl-phosphate reductase, found in Crocosphaera subtropica (strain ATCC 51142 / BH68) (Cyanothece sp. (strain ATCC 51142)).